We begin with the raw amino-acid sequence, 355 residues long: Peptide chain release factor 1 (355 aa).

Gln234 carries the N5-methylglutamine modification.

It belongs to the prokaryotic/mitochondrial release factor family. In terms of processing, methylated by PrmC. Methylation increases the termination efficiency of RF1.

It localises to the cytoplasm. Its function is as follows. Peptide chain release factor 1 directs the termination of translation in response to the peptide chain termination codons UAG and UAA. This is Peptide chain release factor 1 from Metamycoplasma arthritidis (strain 158L3-1) (Mycoplasma arthritidis).